Consider the following 260-residue polypeptide: uncharacterized protein (260 aa).

The 61-residue stretch at 7–67 (VPALTRAIDI…DHQENFCLWT (61 aa)) folds into the HTH iclR-type domain. The segment at residues 28–47 (AATIIDTLGIPKSTAYLLLN) is a DNA-binding region (H-T-H motif). The region spanning 82–251 (LRELARPRLT…ARDISRLLGW (170 aa)) is the IclR-ED domain.

This is an uncharacterized protein from Escherichia coli (strain K12).